Reading from the N-terminus, the 694-residue chain is MQTSPDMFINRELSWLRFNSRVLDQCSKNLPLLEKLKFIAIYCTNLDEFYMIRVAGLKQLFSAGVNASSSDEMTPLQQLKAIRKYLHQEKELLERYFNEITSELEKENLFIKHYENLDENLKQKCDEYFFSNIFPVIVPIAVDATHPFPHLNNLSFSLAVKICDKAHPELVKFGMIRIPRVLPRFYEVSANIYVPIESIVHQHAEEIFPGYKLLASAAFRVTRNADMVIEEEEADDFMMILEQGLKLRRKGAFVRLQIQKDADEQIVEFLNTHMKIFHKDVYEYSILLNLPSLWQIAGNKTFTHLLSPLYTPKTLPPFDENLSIFDAVEKEDILIIQPFESFDPVYKFIKEASKDPEVISIRMTLYRVEKNSNIVQALIDAASDGKQVTVMVELKARFDEENNLHWAKALENAGAHVIYGITGFKVHAKVSQVIRKQGDKLKFYMHLSTGNYNASSAKIYTDVSYFTSKAEFARDTTSFFHILSGFSKNRRLQTLSMSPNQIKEKVLEMIRIETSKKNEGVIVAKMNSLVDSDIIQALYEASMEGVQIDLIIRGICCLKPDEEYSKNIRVRSIIGKYLEHARVFYFKHSEPNYFISSADWMPRNLERRLELMTPIYDERSKAKLAQFLRLQLSDNVLAYKLKNNGEYEKIPSSEKIIDSQQTLEEYVSKIYKTLKKDTDQSRATHLASKLFKEN.

An ATP-binding site is contributed by Asn-45. Mg(2+) contacts are provided by Arg-367 and Arg-397. Residue His-427 is the Phosphohistidine intermediate of the active site. ATP-binding residues include Tyr-460, Arg-553, and His-580.

The protein belongs to the polyphosphate kinase 1 (PPK1) family. Requires Mg(2+) as cofactor. In terms of processing, an intermediate of this reaction is the autophosphorylated ppk in which a phosphate is covalently linked to a histidine residue through a N-P bond.

The catalysed reaction is [phosphate](n) + ATP = [phosphate](n+1) + ADP. Catalyzes the reversible transfer of the terminal phosphate of ATP to form a long-chain polyphosphate (polyP). In Campylobacter jejuni (strain RM1221), this protein is Polyphosphate kinase.